Consider the following 77-residue polypeptide: Acyl carrier protein (77 aa).

One can recognise a Carrier domain in the interval 1–76 (MSLEDDVKAI…DVIKYIQEHQ (76 aa)). Position 36 is an O-(pantetheine 4'-phosphoryl)serine (Ser-36).

This sequence belongs to the acyl carrier protein (ACP) family. 4'-phosphopantetheine is transferred from CoA to a specific serine of apo-ACP by AcpS. This modification is essential for activity because fatty acids are bound in thioester linkage to the sulfhydryl of the prosthetic group.

It localises to the cytoplasm. The protein operates within lipid metabolism; fatty acid biosynthesis. Carrier of the growing fatty acid chain in fatty acid biosynthesis. The chain is Acyl carrier protein from Chlamydia trachomatis serovar L2 (strain ATCC VR-902B / DSM 19102 / 434/Bu).